The following is a 552-amino-acid chain: Chaperonin GroEL (552 aa).

Residues 29-32 (TAGP), lysine 50, 86-90 (DGTTT), glycine 417, and aspartate 499 each bind ATP.

This sequence belongs to the chaperonin (HSP60) family. Forms a cylinder of 14 subunits composed of two heptameric rings stacked back-to-back. Interacts with the co-chaperonin GroES.

The protein resides in the cytoplasm. The catalysed reaction is ATP + H2O + a folded polypeptide = ADP + phosphate + an unfolded polypeptide.. In terms of biological role, together with its co-chaperonin GroES, plays an essential role in assisting protein folding. The GroEL-GroES system forms a nano-cage that allows encapsulation of the non-native substrate proteins and provides a physical environment optimized to promote and accelerate protein folding. In Ehrlichia canis (strain Jake), this protein is Chaperonin GroEL.